Reading from the N-terminus, the 116-residue chain is U30-theraphotoxin-Cg1a (116 aa).

Residues 1–17 (MKLCVLTIASLLVTVTS) form the signal peptide. A propeptide spanning residues 18 to 53 (LETQKEIAEGSELTREETPSLVEHKEDEAAAASEKR) is cleaved from the precursor. The disordered stretch occupies residues 24–46 (IAEGSELTREETPSLVEHKEDEA). 4 disulfides stabilise this stretch: Cys-55-Cys-69, Cys-62-Cys-75, Cys-66-Cys-112, and Cys-68-Cys-88.

This sequence belongs to the neurotoxin 03 (Tx2) family. 02 subfamily. HNTX-XV sub-subfamily. In terms of tissue distribution, expressed by the venom gland.

Its subcellular location is the secreted. Probable ion channel inhibitor. The chain is U30-theraphotoxin-Cg1a from Chilobrachys guangxiensis (Chinese earth tiger tarantula).